The following is a 64-amino-acid chain: Protein YnhH (64 aa).

The chain is Protein YnhH from Escherichia coli (strain K12).